The primary structure comprises 829 residues: Sodium/hydrogen exchanger 3 (829 aa).

The N-terminal stretch at 1–26 (MWHRALGPGWKLLLALALTSLQGARG) is a signal peptide. The Extracellular portion of the chain corresponds to 27–46 (AEEEPSSDGSFQVVTFKWHH). The helical transmembrane segment at 47-69 (VQDPYIIALWILVASLAKIVFHL) threads the bilayer. At 70–77 (SHKVTSIV) the chain is on the cytoplasmic side. The helical transmembrane segment at 78–97 (PESALLIVLGLVLGGIVWAA) threads the bilayer. The Extracellular portion of the chain corresponds to 98–106 (DHIASFTLT). Residues 107–124 (PTLFFFYLLPPIVLDAGY) form a helical membrane-spanning segment. Topologically, residues 125–127 (FMP) are cytoplasmic. Residues 128 to 163 (NRLFFGNLGTILLYAVIGTIWNAATTGLSLYGVFLS) traverse the membrane as a helical segment. Residues glycine 133, glycine 136, and threonine 137 each coordinate a 1,2-diacyl-sn-glycero-3-phospho-(1D-myo-inositol). Residues 164-176 (GLMGELKIGLLDF) are Extracellular-facing. The chain crosses the membrane as a helical span at residues 177–198 (LLFGSLIAAVDPVAVLAVFEEV). The Cytoplasmic portion of the chain corresponds to 199–200 (HV). Residues 201–232 (NEVLFIIVFGESLLNDAVTVVLYNVFESFVTL) traverse the membrane as a helical segment. The Extracellular portion of the chain corresponds to 233–239 (GGDAVTG). The helical transmembrane segment at 240–274 (VDCVKGIVSFFVVSLGGTLVGVIFAFLLSLVTRFT) threads the bilayer. Residues 275-276 (KH) are Cytoplasmic-facing. Residues 277-299 (VRIIEPGFVFVISYLSYLTSEML) traverse the membrane as a helical segment. Residues 300–301 (SL) lie on the Extracellular side of the membrane. The chain crosses the membrane as a helical span at residues 302–318 (SSILAITFCGICCQKYV). Residues 319–325 (KANISEQ) lie on the Cytoplasmic side of the membrane. A helical transmembrane segment spans residues 326 to 354 (SATTVRYTMKMLASGAETIIFMFLGISAV). Residues 355–362 (NPDIWTWN) lie on the Extracellular side of the membrane. A helical membrane pass occupies residues 363–384 (TAFVLLTLVFISVYRAIGVVLQ). The Cytoplasmic portion of the chain corresponds to 385–397 (TWILNRYRMVQLE). Position 393 (methionine 393) interacts with a 1,2-diacyl-sn-glycero-3-phospho-(1D-myo-inositol). The chain crosses the membrane as a helical span at residues 398–421 (TIDQVVMSYGGLRGAVAYALVVLL). Residues 422–428 (DEKKVKE) are Extracellular-facing. A helical membrane pass occupies residues 429–462 (KNLFVSTTLIVVFFTVIFQGLTIKPLVQWLKVKR). Topologically, residues 463–829 (SEHREPKLNE…QPAAPESTHM (367 aa)) are cytoplasmic. 3 residues coordinate a 1,2-diacyl-sn-glycero-3-phospho-(1D-myo-inositol): glutamine 492, isoleucine 493, and histidine 495. Serine 550 and serine 558 each carry phosphoserine. The interval 571 to 585 (RPSTVEASVSYFLRE) is interaction with EZR. The interaction with NHERF4 stretch occupies residues 586-663 (NVSAVCLDMQ…RKRLESFKSA (78 aa)). The interval 587–691 (VSAVCLDMQS…AQKRRNSSIP (105 aa)) is interaction with AHCYL1. Phosphoserine occurs at positions 588 and 603. Serine 659 bears the Phosphoserine; by SGK1 mark. Positions 677–687 (YKRERAQKRRN) are enriched in basic residues. The segment at 677-696 (YKRERAQKRRNSSIPNGKLP) is disordered. Serine 714, serine 805, and serine 808 each carry phosphoserine.

It belongs to the monovalent cation:proton antiporter 1 (CPA1) transporter (TC 2.A.36) family. In terms of assembly, homodimer. Found in the forms of complex and dynamic macromolecular complexes. Binds NHERF1 and NHERF2. Interacts with CHP1; this interaction increases trafficking and activity of SLC9A3 at the plasma membrane. Interacts with CHP2 and SHANK2. Interacts with PDZK1 (via C-terminal PDZ domain). Interacts with NHERF4 and interactions decrease in response to elevated calcium ion levels. Interacts with AHCYL1; the interaction is required for SLC9A3 activity. Interacts with EZR; interaction targets SLC9A3 to the apical membrane. Interacts with SNX27 (via PDZ domains); directs SLC9A3 membrane insertion from early endosomes to the plasma membrane. Phosphorylated by PKA, which inhibits activity. Phosphorylation at Ser-659 by SGK1 is associated with increased abundance at the cell membrane. Phosphorylation at Ser-714 by CSNK2A1 regulates SLC9A3 activity through the formation of multiple signaling complexes.

The protein localises to the apical cell membrane. Its subcellular location is the cell membrane. The protein resides in the recycling endosome membrane. It is found in the early endosome membrane. It catalyses the reaction Na(+)(in) + H(+)(out) = Na(+)(out) + H(+)(in). Its activity is regulated as follows. Seems to switch between active and inactive modes in response to various stimuli. Activated directly or indirectly by membrane phosphatidylinositol (PIs). Regulated by a variety of auxiliary proteins, which facilitate the maturation, cell surface expression and function of the transporter. Inhibited specifically by the drug tenapanor. In terms of biological role, plasma membrane Na(+)/H(+) antiporter. Exchanges intracellular H(+) ions for extracellular Na(+) in 1:1 stoichiometry, playing a key role in salt and fluid absorption and pH homeostasis. Major apical Na(+)/H(+) exchanger in kidney and intestine playing an important role in renal and intestine Na(+) absorption and blood pressure regulation. The sequence is that of Sodium/hydrogen exchanger 3 from Mus musculus (Mouse).